The primary structure comprises 273 residues: Large ribosomal subunit protein uL2cz/uL2cy (273 aa).

Disordered stretches follow at residues 1–22 (MAIHLYKTSTPSTRNGAVDSQV) and 223–254 (MNPVDHPHGGGEGRAPIGRKKPTTPWGYPALG).

Belongs to the universal ribosomal protein uL2 family. As to quaternary structure, part of the 50S ribosomal subunit.

It is found in the plastid. It localises to the chloroplast. This chain is Large ribosomal subunit protein uL2cz/uL2cy (rpl2-A), found in Drimys granadensis.